A 512-amino-acid chain; its full sequence is Apolipoprotein N-acyltransferase (512 aa).

6 consecutive transmembrane segments (helical) span residues 5–25, 56–76, 92–112, 118–138, 168–188, and 195–215; these read LDKY…FAAA, FAVS…FYWI, VPLT…CFWL, LPRG…TEFA, FGGI…LVLA, and SGKR…GYTA. Positions 233–477 constitute a CN hydrolase domain; it reads LQGNIDQTLK…ETVLEGHIKG (245 aa). E271 (proton acceptor) is an active-site residue. Residue K337 is part of the active site. C389 serves as the catalytic Nucleophile. The chain crosses the membrane as a helical span at residues 487-507; the sequence is TGSSWWLMGILTLAALILFIF.

This sequence belongs to the CN hydrolase family. Apolipoprotein N-acyltransferase subfamily.

Its subcellular location is the cell inner membrane. The catalysed reaction is N-terminal S-1,2-diacyl-sn-glyceryl-L-cysteinyl-[lipoprotein] + a glycerophospholipid = N-acyl-S-1,2-diacyl-sn-glyceryl-L-cysteinyl-[lipoprotein] + a 2-acyl-sn-glycero-3-phospholipid + H(+). It participates in protein modification; lipoprotein biosynthesis (N-acyl transfer). Functionally, catalyzes the phospholipid dependent N-acylation of the N-terminal cysteine of apolipoprotein, the last step in lipoprotein maturation. The polypeptide is Apolipoprotein N-acyltransferase (Neisseria meningitidis serogroup A / serotype 4A (strain DSM 15465 / Z2491)).